A 178-amino-acid chain; its full sequence is UPF0114 protein in repA1-repA2 intergenic region (178 aa).

3 helical membrane-spanning segments follow: residues 14–34, 53–73, and 136–156; these read WLIF…TLKF, LILV…LVMV, and WYVI…YIDR.

Belongs to the UPF0114 family.

The protein localises to the cell membrane. The polypeptide is UPF0114 protein in repA1-repA2 intergenic region (Buchnera aphidicola subsp. Tetraneura caerulescens).